Reading from the N-terminus, the 566-residue chain is OTU domain-containing protein 5 (566 aa).

Disordered regions lie at residues 1 to 117 (MTIL…GDAL) and 146 to 175 (PGHS…GAGY). A compositionally biased stretch (pro residues) spans 11–30 (PPDADPANEPPPPGPLPPAP). The segment covering 32–47 (RGGGVGVGGGGTGVGG) has biased composition (gly residues). Residues 63 to 75 (ASPPPQGPLPGPP) are compositionally biased toward pro residues. Ser-64 is subject to Phosphoserine. Low complexity predominate over residues 84–97 (AVPPGAVAGPRPQQ). A compositionally biased stretch (gly residues) spans 105–115 (GPGGPGGGPGD). At Ser-165 the chain carries Phosphoserine. Position 175 is a phosphotyrosine (Tyr-175). Ser-177 bears the Phosphoserine mark. Thr-195 bears the Phosphothreonine mark. The OTU domain occupies 213 to 336 (FIIKQMKEDG…NIHYNSVVNP (124 aa)). The tract at residues 218-224 (MKEDGAC) is cys-loop. Asp-221 is an active-site residue. Residue Cys-224 is the Nucleophile of the active site. A variable-loop region spans residues 273-283 (KRKNNCHGNHI). Residue Ser-323 is modified to Phosphoserine. The segment at 324 to 329 (YHRNIH) is his-loop. Residue His-329 is part of the active site. Phosphoserine occurs at positions 332 and 370. The tract at residues 413–497 (ARQVRGPSQP…PGTSSQFSAG (85 aa)) is disordered. Low complexity-rich tracts occupy residues 425-438 (ASAT…AASS) and 445-457 (SRSP…ASSP). Ser-447 is modified (phosphoserine). Position 502 is a phosphothreonine (Thr-502). A Phosphoserine modification is found at Ser-503.

It belongs to the peptidase C85 family. Interacts with TRAF3. In terms of processing, phosphorylation at Ser-177 is required for deubiquitinating activity. Phosphorylation at Ser-323, Ser-332 and Ser-503 by MTOR promotes its activity.

The protein localises to the nucleus. It carries out the reaction Thiol-dependent hydrolysis of ester, thioester, amide, peptide and isopeptide bonds formed by the C-terminal Gly of ubiquitin (a 76-residue protein attached to proteins as an intracellular targeting signal).. With respect to regulation, inhibited by N-ethyl-maleimide (NEM). In terms of biological role, deubiquitinating enzyme that functions as a negative regulator of the innate immune system. Has peptidase activity towards 'Lys-48'- and 'Lys-63'-linked polyubiquitin chains. Can also cleave 'Lys-11'-linked ubiquitin chains (in vitro). Acts via TRAF3 deubiquitination and subsequent suppression of type I interferon (IFN) production. Controls neuroectodermal differentiation through cleaving 'Lys-48'-linked ubiquitin chains to counteract degradation of select chromatin regulators such as ARID1A, HDAC2 and HCF1. Acts as a positive regulator of mTORC1 and mTORC2 signaling following phosphorylation by MTOR: acts by mediating deubiquitination of BTRC, leading to its stability. The sequence is that of OTU domain-containing protein 5 from Rattus norvegicus (Rat).